A 146-amino-acid chain; its full sequence is Probable actin-related protein 2/3 complex subunit 5 (146 aa).

The protein belongs to the ARPC5 family. Component of the Arp2/3 complex composed of ARP2, ARP3, ARPC1B/p41-ARC, ARPC2/p34-ARC, ARPC3/p21-ARC, ARPC4/p20-ARC and ARPC5/p16-ARC.

Its subcellular location is the cytoplasm. The protein localises to the cytoskeleton. Its function is as follows. Functions as a component of the Arp2/3 complex which is involved in regulation of actin polymerization and together with an activating nucleation-promoting factor (NPF) mediates the formation of branched actin networks. The polypeptide is Probable actin-related protein 2/3 complex subunit 5 (Caenorhabditis elegans).